Here is a 334-residue protein sequence, read N- to C-terminus: Holliday junction branch migration complex subunit RuvB (334 aa).

A large ATPase domain (RuvB-L) region spans residues 1-179 (MTHKISVLHQ…FAFTGRVDYY (179 aa)). Residues Leu-18, Arg-19, Gly-60, Lys-63, Thr-64, Ser-65, 126–128 (EDF), Arg-169, Tyr-179, and Arg-216 contribute to the ATP site. Position 64 (Thr-64) interacts with Mg(2+). The interval 180-250 (TDEDLVSILS…VAEKALAMLL (71 aa)) is small ATPAse domain (RuvB-S). The interval 253–334 (NLGLNEIDIK…RNPKDRWGEE (82 aa)) is head domain (RuvB-H). Residues Arg-308 and Arg-313 each coordinate DNA.

The protein belongs to the RuvB family. As to quaternary structure, homohexamer. Forms an RuvA(8)-RuvB(12)-Holliday junction (HJ) complex. HJ DNA is sandwiched between 2 RuvA tetramers; dsDNA enters through RuvA and exits via RuvB. An RuvB hexamer assembles on each DNA strand where it exits the tetramer. Each RuvB hexamer is contacted by two RuvA subunits (via domain III) on 2 adjacent RuvB subunits; this complex drives branch migration. In the full resolvosome a probable DNA-RuvA(4)-RuvB(12)-RuvC(2) complex forms which resolves the HJ.

Its subcellular location is the cytoplasm. It carries out the reaction ATP + H2O = ADP + phosphate + H(+). Functionally, the RuvA-RuvB-RuvC complex processes Holliday junction (HJ) DNA during genetic recombination and DNA repair, while the RuvA-RuvB complex plays an important role in the rescue of blocked DNA replication forks via replication fork reversal (RFR). RuvA specifically binds to HJ cruciform DNA, conferring on it an open structure. The RuvB hexamer acts as an ATP-dependent pump, pulling dsDNA into and through the RuvAB complex. RuvB forms 2 homohexamers on either side of HJ DNA bound by 1 or 2 RuvA tetramers; 4 subunits per hexamer contact DNA at a time. Coordinated motions by a converter formed by DNA-disengaged RuvB subunits stimulates ATP hydrolysis and nucleotide exchange. Immobilization of the converter enables RuvB to convert the ATP-contained energy into a lever motion, pulling 2 nucleotides of DNA out of the RuvA tetramer per ATP hydrolyzed, thus driving DNA branch migration. The RuvB motors rotate together with the DNA substrate, which together with the progressing nucleotide cycle form the mechanistic basis for DNA recombination by continuous HJ branch migration. Branch migration allows RuvC to scan DNA until it finds its consensus sequence, where it cleaves and resolves cruciform DNA. In Chlamydia trachomatis serovar L2 (strain ATCC VR-902B / DSM 19102 / 434/Bu), this protein is Holliday junction branch migration complex subunit RuvB.